The primary structure comprises 82 residues: ATP synthase subunit c, chloroplastic (82 aa).

Transmembrane regions (helical) follow at residues 3-23 and 57-77; these read PLIS…ASIG and FAFM…LLFA.

Belongs to the ATPase C chain family. F-type ATPases have 2 components, F(1) - the catalytic core - and F(0) - the membrane proton channel. F(1) has five subunits: alpha(3), beta(3), gamma(1), delta(1), epsilon(1). F(0) has four main subunits: a(1), b(1), b'(1) and c(10-14). The alpha and beta chains form an alternating ring which encloses part of the gamma chain. F(1) is attached to F(0) by a central stalk formed by the gamma and epsilon chains, while a peripheral stalk is formed by the delta, b and b' chains.

The protein resides in the plastid. It is found in the chloroplast thylakoid membrane. In terms of biological role, f(1)F(0) ATP synthase produces ATP from ADP in the presence of a proton or sodium gradient. F-type ATPases consist of two structural domains, F(1) containing the extramembraneous catalytic core and F(0) containing the membrane proton channel, linked together by a central stalk and a peripheral stalk. During catalysis, ATP synthesis in the catalytic domain of F(1) is coupled via a rotary mechanism of the central stalk subunits to proton translocation. Functionally, key component of the F(0) channel; it plays a direct role in translocation across the membrane. A homomeric c-ring of between 10-14 subunits forms the central stalk rotor element with the F(1) delta and epsilon subunits. This Mesostigma viride (Green alga) protein is ATP synthase subunit c, chloroplastic.